We begin with the raw amino-acid sequence, 544 residues long: Ribosomal protein S6 kinase-like 1 (544 aa).

The 29-residue stretch at 87-115 (VHVDPNKERREAVKLKITKYLRRAEEIFN) folds into the MIT domain. Residues 145 to 534 (SALEQLKGCR…TSRLKSHPFF (390 aa)) enclose the Protein kinase domain. Residues 151–159 (KGCRVVGII) and lysine 177 contribute to the ATP site. 2 disordered regions span residues 262–344 (PAEL…HWVR) and 353–372 (AYGR…SLGS). Over residues 303-313 (SRPSAVFSSDP) the composition is skewed to polar residues. Aspartate 407 acts as the Proton acceptor in catalysis.

The protein belongs to the protein kinase superfamily. Ser/Thr protein kinase family. S6 kinase subfamily.

The catalysed reaction is L-seryl-[protein] + ATP = O-phospho-L-seryl-[protein] + ADP + H(+). The enzyme catalyses L-threonyl-[protein] + ATP = O-phospho-L-threonyl-[protein] + ADP + H(+). The sequence is that of Ribosomal protein S6 kinase-like 1 (Rps6kl1) from Mus musculus (Mouse).